Consider the following 497-residue polypeptide: 3-octaprenyl-4-hydroxybenzoate carboxy-lyase (497 aa).

Asparagine 175 contributes to the Mn(2+) binding site. Residues isoleucine 178–arginine 180, arginine 192–leucine 194, and arginine 197–glycine 198 contribute to the prenylated FMN site. A Mn(2+)-binding site is contributed by glutamate 241. Aspartate 290 (proton donor) is an active-site residue.

Belongs to the UbiD family. In terms of assembly, homohexamer. Requires prenylated FMN as cofactor. It depends on Mn(2+) as a cofactor.

Its subcellular location is the cell membrane. The enzyme catalyses a 4-hydroxy-3-(all-trans-polyprenyl)benzoate + H(+) = a 2-(all-trans-polyprenyl)phenol + CO2. It functions in the pathway cofactor biosynthesis; ubiquinone biosynthesis. Its function is as follows. Catalyzes the decarboxylation of 3-octaprenyl-4-hydroxy benzoate to 2-octaprenylphenol, an intermediate step in ubiquinone biosynthesis. The polypeptide is 3-octaprenyl-4-hydroxybenzoate carboxy-lyase (Shigella sonnei (strain Ss046)).